Consider the following 297-residue polypeptide: Phosphoribosylaminoimidazole-succinocarboxamide synthase (297 aa).

This sequence belongs to the SAICAR synthetase family.

It carries out the reaction 5-amino-1-(5-phospho-D-ribosyl)imidazole-4-carboxylate + L-aspartate + ATP = (2S)-2-[5-amino-1-(5-phospho-beta-D-ribosyl)imidazole-4-carboxamido]succinate + ADP + phosphate + 2 H(+). The protein operates within purine metabolism; IMP biosynthesis via de novo pathway; 5-amino-1-(5-phospho-D-ribosyl)imidazole-4-carboxamide from 5-amino-1-(5-phospho-D-ribosyl)imidazole-4-carboxylate: step 1/2. In Methylococcus capsulatus (strain ATCC 33009 / NCIMB 11132 / Bath), this protein is Phosphoribosylaminoimidazole-succinocarboxamide synthase.